Consider the following 442-residue polypeptide: MSNTKQAPKVGFVSLGCPKNLVDSERILTQLRTEGYDVVPSYDDAELVVVNTCGFIDSAVQESLEAIGEALAENGKVIVTGCLGAKENQIREIHPKVLEITGPHAYEEVLGHVHKYVAKPTHNPFTSLVPAHGVKLTPRHYAYLKISEGCNHRCTFCIIPSMRGDLVSRPIGEVLAEAKRLKEAGVKEILVISQDTSAYGVDVKHRTGFYDGMPVKTSMVALCEELAKLDIWVRLHYVYPYPHVDDVIPLMRDGKVLPYLDIPLQHASPRILKLMKRPGTVERTLERIQKWREICPEITLRSTFIVGFPGETEEEFQMLLDFIDKAELDRVGCFKYSPVEGAKANELPDPVPEDVQEERFQRFMELQQQVSIRKLARKVGKEMTVLIDEVDEEGATGRSFADAPEIDGLVYLNGETDLKPGDLVKVRIDEADEYDLWASLIG.

The region spanning 8–118 (PKVGFVSLGC…VLGHVHKYVA (111 aa)) is the MTTase N-terminal domain. Positions 17, 53, 82, 150, 154, and 157 each coordinate [4Fe-4S] cluster. The Radical SAM core domain maps to 136–373 (LTPRHYAYLK…MELQQQVSIR (238 aa)). The TRAM domain occupies 376 to 442 (ARKVGKEMTV…EYDLWASLIG (67 aa)).

It belongs to the methylthiotransferase family. RimO subfamily. [4Fe-4S] cluster serves as cofactor.

It localises to the cytoplasm. It carries out the reaction L-aspartate(89)-[ribosomal protein uS12]-hydrogen + (sulfur carrier)-SH + AH2 + 2 S-adenosyl-L-methionine = 3-methylsulfanyl-L-aspartate(89)-[ribosomal protein uS12]-hydrogen + (sulfur carrier)-H + 5'-deoxyadenosine + L-methionine + A + S-adenosyl-L-homocysteine + 2 H(+). In terms of biological role, catalyzes the methylthiolation of an aspartic acid residue of ribosomal protein uS12. The protein is Ribosomal protein uS12 methylthiotransferase RimO of Aeromonas salmonicida (strain A449).